The chain runs to 259 residues: DNA-directed RNA polymerase 30 kDa polypeptide (259 aa).

Residues 155-195 (YNTPCPNCKSRNTTPMMIQTRAADEPPLVRHACRDCKQHFK) form a TFIIS-type zinc finger. Zn(2+) contacts are provided by Cys159, Cys162, Cys187, and Cys190. A disordered region spans residues 220-259 (EILPDNNPSPPESPEPASPIDDGLIRATFDRNDEPPEDDE). The segment covering 226–236 (NPSPPESPEPA) has biased composition (pro residues).

Belongs to the poxviridae DNA-directed RNA polymerase 30 kDa subunit family. In terms of assembly, the DNA-dependent RNA polymerase (vRNAP) consists of eight subunits encoded by early viral genes and termed according to their apparent molecular masses Rpo147, Rpo132, Rpo35, Rpo30, Rpo22, Rpo19, Rpo18, and Rpo7. The same holoenzyme, with the addition of the transcription-specificity factor RAP94, is used for early gene expression.

It is found in the virion. The protein resides in the host cytoplasm. It carries out the reaction RNA(n) + a ribonucleoside 5'-triphosphate = RNA(n+1) + diphosphate. Part of the DNA-dependent RNA polymerase which catalyzes the transcription of viral DNA into RNA using the four ribonucleoside triphosphates as substrates. Responsible for the transcription of early, intermediate and late genes. DNA-dependent RNA polymerase associates with the early transcription factor (ETF), itself composed of OPG118 and OPG134, thereby allowing the early genes transcription. Late transcription, and probably also intermediate transcription, require newly synthesized RNA polymerase. The protein is DNA-directed RNA polymerase 30 kDa polypeptide (OPG066) of Bos taurus (Bovine).